Here is a 482-residue protein sequence, read N- to C-terminus: Methylenetetrahydrofolate--tRNA-(uracil-5-)-methyltransferase TrmFO (482 aa).

20–25 lines the FAD pocket; that stretch reads GGGLAG.

It belongs to the MnmG family. TrmFO subfamily. It depends on FAD as a cofactor.

The protein resides in the cytoplasm. The enzyme catalyses uridine(54) in tRNA + (6R)-5,10-methylene-5,6,7,8-tetrahydrofolate + NADH + H(+) = 5-methyluridine(54) in tRNA + (6S)-5,6,7,8-tetrahydrofolate + NAD(+). It carries out the reaction uridine(54) in tRNA + (6R)-5,10-methylene-5,6,7,8-tetrahydrofolate + NADPH + H(+) = 5-methyluridine(54) in tRNA + (6S)-5,6,7,8-tetrahydrofolate + NADP(+). In terms of biological role, catalyzes the folate-dependent formation of 5-methyl-uridine at position 54 (M-5-U54) in all tRNAs. In Rhodopseudomonas palustris (strain HaA2), this protein is Methylenetetrahydrofolate--tRNA-(uracil-5-)-methyltransferase TrmFO.